A 1838-amino-acid chain; its full sequence is Collagen alpha-1(V) chain (1838 aa).

A signal peptide spans M1 to A36. Residues D72–C244 enclose the Laminin G-like domain. The segment at R231 to E443 is nonhelical region. Sulfotyrosine is present on residues Y234, Y236, Y240, Y262, and Y263. 2 disordered regions span residues P242–Q545 and G559–Q1574. Over residues N258–G268 the composition is skewed to acidic residues. 4 stretches are compositionally biased toward low complexity: residues D335 to Y345, V374 to P387, Y413 to S428, and I460 to G469. The tract at residues G444 to R558 is interrupted collagenous region. Residues P470–T485 are compositionally biased toward pro residues. Low complexity-rich tracts occupy residues L506–P523 and G559–P570. The triple-helical region stretch occupies residues G559 to G1570. 4-hydroxyproline occurs at positions 570, 576, and 621. At K627 the chain carries 5-hydroxylysine. P639 carries the 4-hydroxyproline modification. 5-hydroxylysine is present on K642. Residues P648, P654, P657, P675, and P678 each carry the 4-hydroxyproline modification. The span at P671–P686 shows a compositional bias: low complexity. 3-hydroxyproline occurs at positions 680 and 686. Residues K687–P696 show a composition bias toward pro residues. P690, P696, and P705 each carry 4-hydroxyproline. Position 708 is a 5-hydroxylysine (K708). P717, P720, P726, and P732 each carry 4-hydroxyproline. The span at Q722–P741 shows a compositional bias: low complexity. At K744 the chain carries 5-hydroxylysine. Over residues L747 to P756 the composition is skewed to low complexity. 4-hydroxyproline occurs at positions 750, 756, 762, 765, and 771. A 5-hydroxylysine modification is found at K774. 4-hydroxyproline occurs at positions 780 and 789. 5-hydroxylysine is present on residues K795, K804, K807, and K810. The residue at position 816 (P816) is a 4-hydroxyproline. At K819 the chain carries 5-hydroxylysine. Position 834 is a 4-hydroxyproline (P834). Positions R837 to K846 are enriched in basic and acidic residues. 5-hydroxylysine is present on residues K846 and K864. P870, P873, and P876 each carry 4-hydroxyproline. K882 carries the post-translational modification 5-hydroxylysine. 4-hydroxyproline is present on residues P888 and P891. Residue K897 is modified to 5-hydroxylysine. Residues P903 and P906 each carry the 4-hydroxyproline modification. Residues P908–P917 show a composition bias toward low complexity. 4-hydroxyproline occurs at positions 930 and 945. Composition is skewed to low complexity over residues K971–T990 and V999–M1011. P1017, P1020, P1023, and P1029 each carry 4-hydroxyproline. Over residues S1088–P1104 the composition is skewed to low complexity. Over residues R1106–P1115 the composition is skewed to pro residues. 4-hydroxyproline occurs at positions 1221 and 1224. The segment covering P1259–P1268 has biased composition (low complexity). Positions G1294–G1303 are enriched in gly residues. Composition is skewed to pro residues over residues T1380 to A1398 and S1454 to L1469. 4-hydroxyproline is present on residues P1467 and P1470. Over residues P1485 to P1494 the composition is skewed to low complexity. Residues P1526–P1541 are compositionally biased toward pro residues. Residues K1542 to K1554 are compositionally biased toward low complexity. The interval E1571 to A1605 is nonhelical region. A sulfotyrosine mark is found at Y1601 and Y1604. Residues E1609–L1837 form the Fibrillar collagen NC1 domain.

It belongs to the fibrillar collagen family. As to quaternary structure, trimers of two alpha 1(V) and one alpha 2(V) chains in most tissues and trimers of one alpha 1(V), one alpha 2(V), and one alpha 3(V) chains in placenta. Interacts with CSPG4. In terms of processing, hydroxylation on proline residues within the sequence motif, GXPG, is most likely to be 4-hydroxy as this fits the requirement for 4-hydroxylation in vertebrates. Sulfated on 40% of tyrosines. In terms of tissue distribution, widely expressed. Isoform 2 is more highly expressed in liver, kidney and lung.

The protein resides in the secreted. It localises to the extracellular space. Its subcellular location is the extracellular matrix. In terms of biological role, type V collagen is a member of group I collagen (fibrillar forming collagen). It is a minor connective tissue component of nearly ubiquitous distribution. Type V collagen binds to DNA, heparan sulfate, thrombospondin, heparin, and insulin. Transcriptionally activated by CEBPZ, which recognizes a CCAAT-like motif, CAAAT in the COL5A1 promoter. This chain is Collagen alpha-1(V) chain (Col5a1), found in Mus musculus (Mouse).